Reading from the N-terminus, the 364-residue chain is MYIKYLKLINFRNYKELDIEFDKNINIFVGDNAQGKTNILESMYYCSIGKSPRTSKDKELINWDNKESYIKVHILKKLFNKKIEIKIFKEGKKGININSIKVSKLSELMGVLNVVMFSPEDLKIIKESPVYRRKFLDIELCKFSKKYYYGLVQYNKVLTARNIILKKWNKGNYIDILQVYDKQLAKYGEVIIKLRNNYLKKLSEKGKVIHSDITSGIENIEFKYMTCLTNFDNIEDDLFKILEFNRKKDIYKGITLYGPHRDDFIVNINGVNVRNFGSQGQQRTSILTMKFASLEIIKEIIGEYPVLLLDDVLSELDKNRQKYILSSIKDIQTFITCTGIDDIKKSIIDEAQLFIVKKGKVSRI.

Residue G30–T37 participates in ATP binding.

The protein belongs to the RecF family.

The protein localises to the cytoplasm. Its function is as follows. The RecF protein is involved in DNA metabolism; it is required for DNA replication and normal SOS inducibility. RecF binds preferentially to single-stranded, linear DNA. It also seems to bind ATP. The sequence is that of DNA replication and repair protein RecF from Clostridium kluyveri (strain ATCC 8527 / DSM 555 / NBRC 12016 / NCIMB 10680 / K1).